Here is a 396-residue protein sequence, read N- to C-terminus: Probable tRNA sulfurtransferase (396 aa).

One can recognise a THUMP domain in the interval 63 to 166; that stretch reads AAAARASARV…GRRAYFFDTI (104 aa). Residues 184-185, Arg-266, Gly-288, and Gln-297 each bind ATP; that span reads LY.

It belongs to the ThiI family.

The protein localises to the cytoplasm. It carries out the reaction [ThiI sulfur-carrier protein]-S-sulfanyl-L-cysteine + a uridine in tRNA + 2 reduced [2Fe-2S]-[ferredoxin] + ATP + H(+) = [ThiI sulfur-carrier protein]-L-cysteine + a 4-thiouridine in tRNA + 2 oxidized [2Fe-2S]-[ferredoxin] + AMP + diphosphate. The catalysed reaction is [ThiS sulfur-carrier protein]-C-terminal Gly-Gly-AMP + S-sulfanyl-L-cysteinyl-[cysteine desulfurase] + AH2 = [ThiS sulfur-carrier protein]-C-terminal-Gly-aminoethanethioate + L-cysteinyl-[cysteine desulfurase] + A + AMP + 2 H(+). It participates in cofactor biosynthesis; thiamine diphosphate biosynthesis. Catalyzes the ATP-dependent transfer of a sulfur to tRNA to produce 4-thiouridine in position 8 of tRNAs, which functions as a near-UV photosensor. Also catalyzes the transfer of sulfur to the sulfur carrier protein ThiS, forming ThiS-thiocarboxylate. This is a step in the synthesis of thiazole, in the thiamine biosynthesis pathway. The sulfur is donated as persulfide by IscS. The protein is Probable tRNA sulfurtransferase of Aeropyrum pernix (strain ATCC 700893 / DSM 11879 / JCM 9820 / NBRC 100138 / K1).